Here is a 378-residue protein sequence, read N- to C-terminus: Histone deacetylase 8 (378 aa).

A histone deacetylase region spans residues 15 to 325 (RSVVYVYSPE…WTYLTGTVLG (311 aa)). Aspartate 102 lines the substrate pocket. Histidine 144 serves as the catalytic Proton acceptor. Glycine 152 is a binding site for substrate. The a divalent metal cation site is built by aspartate 179, histidine 181, and aspartate 268. Tyrosine 307 provides a ligand contact to substrate.

This sequence belongs to the histone deacetylase family. HD type 1 subfamily. Requires a divalent metal cation as cofactor.

The protein localises to the nucleus. The protein resides in the chromosome. It localises to the cytoplasm. It catalyses the reaction N(6)-acetyl-L-lysyl-[histone] + H2O = L-lysyl-[histone] + acetate. The enzyme catalyses N(6)-acetyl-L-lysyl-[protein] + H2O = L-lysyl-[protein] + acetate. The catalysed reaction is N(6)-(2E)-butenoyl-L-lysyl-[protein] + H2O = (2E)-2-butenoate + L-lysyl-[protein]. Its activity is inhibited by trichostatin A (TSA) and butyrate, 2 well known histone deacetylase inhibitors. Functionally, histone deacetylase that catalyzes the deacetylation of lysine residues on the N-terminal part of the core histones (H2A, H2B, H3 and H4). Histone deacetylation gives a tag for epigenetic repression and plays an important role in transcriptional regulation, cell cycle progression and developmental events. Histone deacetylases act via the formation of large multiprotein complexes. Also involved in the deacetylation of non-histone proteins. In addition to protein deacetylase activity, also has protein-lysine deacylase activity: acts as a protein decrotonylase by mediating decrotonylation ((2E)-butenoyl) of histones. This Danio rerio (Zebrafish) protein is Histone deacetylase 8 (hdac8).